We begin with the raw amino-acid sequence, 334 residues long: WD repeat domain 54 (334 aa).

WD repeat units lie at residues 162–206 (GHQT…TLLT), 208–247 (IAGF…LHIQ), and 250–289 (AHAR…ESGS).

As to quaternary structure, homodimer and homotrimer; forms tight forms of dimers and trimers. Interacts with IZUMO1 and IZUMO1R/JUNO. Post-translationally, cross-linked to tightly form both dimers and trimers by TGM2. Cross-linking enhances the activation of EGF receptor-mediated signaling pathway. Cross-linking is inhibited by EGF. In terms of processing, ubiquitinated. EGF increases ubiquitination. In terms of tissue distribution, widely expressed in the ovary and testis (at protein level).

The protein localises to the vesicle. It localises to the cytoplasm. The protein resides in the cell membrane. Its function is as follows. Plays a role in the adhesion and fusion of the sperm-oocyte membrane through its interactions with IZUMO1 and IZUMO1R/JUNO. When cross-linked to form dimers and trimers, it has a regulatory effect on ERK signaling pathway activity in response to EGF stimulation. Colocalizes with the EGF receptor in WDR54-specific vesicle where it sustains the internalization and controls the degradation of the EGF receptor after EGF stimulation. The sequence is that of WD repeat domain 54 (Wdr54) from Rattus norvegicus (Rat).